A 533-amino-acid polypeptide reads, in one-letter code: Protein mono-ADP-ribosyltransferase PARP3 (533 aa).

A disordered region spans residues 1-30 (MAPKPKPWVQTEGPEKKKGRQAGREEDPFR). The residue at position 6 (Lys6) is an N6-(ADP-ribosyl)lysine. An ADP-ribosyl glutamic acid mark is found at Glu12, Glu15, Glu26, and Glu34. The Nuclear localization signal signature appears at 14-20 (PEKKKGR). An N6-(ADP-ribosyl)lysine modification is found at Lys37. A WGR domain is found at 59–150 (GTQVYEDYNC…DHFVSHPGKY (92 aa)). An ADP-ribosyl aspartic acid modification is found at Asp141. Glu163 is subject to ADP-ribosyl glutamic acid. One can recognise a PARP alpha-helical domain in the interval 182-300 (PCSLDPATQK…DIELAQALQA (119 aa)). Position 210 is an ADP-ribosyl aspartic acid (Asp210). Glu231, Glu309, Glu310, Glu344, and Glu449 each carry ADP-ribosyl glutamic acid. A PARP catalytic domain is found at 313–533 (HPLDRDYQLL…RLRYLLEVHL (221 aa)). The interval 454 to 482 (TDNPSLKSPPPGFDSVIARGHTEPDPTQD) is disordered.

The protein belongs to the ARTD/PARP family. Interacts with PARP1; leading to activate PARP1 in absence of DNA. Interacts with PRKDC. Interacts with XRCC5/Ku80; the interaction is dependent on nucleic acids. Interacts with XRCC6/Ku70; the interaction is dependent on nucleic acids. Interacts with EZH2, HDAC1, HDAC2, SUZ12, YY1, LRIG3 and LIG4. In terms of processing, auto-mono-ADP-ribosylated. Widely expressed; the highest levels are in the kidney, skeletal muscle, liver, heart and spleen; also detected in pancreas, lung, placenta, brain, leukocytes, colon, small intestine, ovary, testis, prostate and thymus.

It is found in the nucleus. The protein resides in the chromosome. Its subcellular location is the cytoplasm. It localises to the cytoskeleton. The protein localises to the microtubule organizing center. It is found in the centrosome. The protein resides in the centriole. The enzyme catalyses L-aspartyl-[protein] + NAD(+) = 4-O-(ADP-D-ribosyl)-L-aspartyl-[protein] + nicotinamide. The catalysed reaction is L-glutamyl-[protein] + NAD(+) = 5-O-(ADP-D-ribosyl)-L-glutamyl-[protein] + nicotinamide. It catalyses the reaction L-lysyl-[protein] + NAD(+) = N(6)-(ADP-D-ribosyl)-L-lysyl-[protein] + nicotinamide + H(+). Its activity is regulated as follows. Mono-ADP-ribosyltransferase activity of PARP3 is selectively inhibited by ME0328 compound; ME0328 does not inhibit other ARTD/PARP enzymes, such as PARP1. Mono-ADP-ribosyltransferase is strongly inhibited by KU0058948 compound. In terms of biological role, mono-ADP-ribosyltransferase that mediates mono-ADP-ribosylation of target proteins and plays a key role in the response to DNA damage. Mediates mono-ADP-ribosylation of glutamate, aspartate or lysine residues on target proteins. In contrast to PARP1 and PARP2, it is not able to mediate poly-ADP-ribosylation. Involved in DNA repair by mediating mono-ADP-ribosylation of a limited number of acceptor proteins involved in chromatin architecture and in DNA metabolism, such as histone H2B, XRCC5 and XRCC6. ADP-ribosylation follows DNA damage and appears as an obligatory step in a detection/signaling pathway leading to the reparation of DNA strand breaks. Involved in single-strand break repair by catalyzing mono-ADP-ribosylation of histone H2B on 'Glu-2' (H2BE2ADPr) of nucleosomes containing nicked DNA. Cooperates with the XRCC5-XRCC6 (Ku80-Ku70) heterodimer to limit end-resection thereby promoting accurate NHEJ. Suppresses G-quadruplex (G4) structures in response to DNA damage. Associates with a number of DNA repair factors and is involved in the response to exogenous and endogenous DNA strand breaks. Together with APLF, promotes the retention of the LIG4-XRCC4 complex on chromatin and accelerate DNA ligation during non-homologous end-joining (NHEJ). May link the DNA damage surveillance network to the mitotic fidelity checkpoint. Acts as a negative regulator of immunoglobulin class switch recombination, probably by controlling the level of AICDA /AID on the chromatin. In addition to proteins, also able to ADP-ribosylate DNA: mediates DNA mono-ADP-ribosylation of DNA strand break termini via covalent addition of a single ADP-ribose moiety to a 5'- or 3'-terminal phosphate residues in DNA containing multiple strand breaks. In Homo sapiens (Human), this protein is Protein mono-ADP-ribosyltransferase PARP3.